Consider the following 130-residue polypeptide: Protein YgiW (130 aa).

Positions 1-20 are cleaved as a signal peptide; sequence MKKFAAVIAVMALCSAPVMA. The interval 25 to 44 is disordered; that stretch reads GFSGPSATQSQAGGFQGPNG. A compositionally biased stretch (polar residues) spans 29–44; the sequence is PSATQSQAGGFQGPNG.

To H.influenzae HI_1709.

Its subcellular location is the periplasm. The chain is Protein YgiW (ygiW) from Escherichia coli O157:H7.